A 160-amino-acid polypeptide reads, in one-letter code: Large ribosomal subunit protein uL22c (160 aa).

Belongs to the universal ribosomal protein uL22 family. As to quaternary structure, part of the 50S ribosomal subunit.

It is found in the plastid. The protein localises to the chloroplast. Functionally, this protein binds specifically to 23S rRNA. In terms of biological role, the globular domain of the protein is located near the polypeptide exit tunnel on the outside of the subunit, while an extended beta-hairpin is found that lines the wall of the exit tunnel in the center of the 70S ribosome. The polypeptide is Large ribosomal subunit protein uL22c (rpl22) (Draba nemorosa (Woodland whitlowgrass)).